The primary structure comprises 406 residues: Lymphocyte transmembrane adapter 1 (406 aa).

Positions 1–25 (MYTTPAPPEITRRSSEPSTQQGTLG) are disordered. Residues 1–33 (MYTTPAPPEITRRSSEPSTQQGTLGSLEGEKGH) are Extracellular-facing. A helical; Signal-anchor for type III membrane protein membrane pass occupies residues 34 to 54 (LLFPGFVVLVTIFLVVIVTCI). Residues 55–406 (LWSRKKQKKR…LATETSGEEV (352 aa)) lie on the Cytoplasmic side of the membrane. The interval 109–131 (ESLLSRASDSPEPEVPQASGSLQ) is disordered. Tyrosine 184 carries the post-translational modification Phosphotyrosine. The disordered stretch occupies residues 219–258 (AEGGHAGCGKATDRTGVWAPGLQGSNSLSEGDDSSQSSND). Residues 242–258 (GSNSLSEGDDSSQSSND) are compositionally biased toward low complexity. Residues tyrosine 259, tyrosine 285, and tyrosine 352 each carry the phosphotyrosine modification. The segment at 358–406 (PELEGKDWKQGPGTWHPSDERTPSDQAGKFCEAVYPAGSLATETSGEEV) is disordered.

When phosphorylated, interacts with GRB2, PIK3R1 and GRAP2. In terms of processing, phosphorylated on tyrosines upon TCR or BCR activation; which leads to the recruitment of GRB2, PIK3R1 and GRAP2.

The protein localises to the cell membrane. Functionally, negatively regulates TCR (T-cell antigen receptor)-mediated signaling in T-cells and BCR (B-cell antigen receptor)-mediated signaling in B-cells. This chain is Lymphocyte transmembrane adapter 1 (Lax1), found in Rattus norvegicus (Rat).